Consider the following 786-residue polypeptide: Polyribonucleotide nucleotidyltransferase (786 aa).

Asp516 and Asp522 together coordinate Mg(2+). In terms of domain architecture, KH spans 582-641 (PRVTTVKIPVDKIGMVIGPKGQTINAIQDETGAEISIEDDGTIYVGATNGPSAQAAVERV). An S1 motif domain is found at 653–722 (GDRFLGTVVK…QRGKIYLDKV (70 aa)). Residues 722–786 (VRPEGAEGPA…SRPRRRTRHS (65 aa)) are disordered. Residues 727–738 (AEGPAEAAATDR) show a composition bias toward low complexity. Over residues 739–778 (PAGRDRGDRAPRDRGDRGDRERGSRGPDRGDGGEGGGESR) the composition is skewed to basic and acidic residues.

It belongs to the polyribonucleotide nucleotidyltransferase family. Requires Mg(2+) as cofactor.

The protein localises to the cytoplasm. It catalyses the reaction RNA(n+1) + phosphate = RNA(n) + a ribonucleoside 5'-diphosphate. Functionally, involved in mRNA degradation. Catalyzes the phosphorolysis of single-stranded polyribonucleotides processively in the 3'- to 5'-direction. This Salinispora arenicola (strain CNS-205) protein is Polyribonucleotide nucleotidyltransferase.